Here is a 391-residue protein sequence, read N- to C-terminus: Lysophosphatidylinositol acyltransferase 10 (391 aa).

A run of 5 helical transmembrane segments spans residues 10–30, 52–72, 97–119, 323–343, and 347–367; these read LLGW…NYII, AISY…GVRI, WMYM…KISL, LTSL…IFFV, and QLGF…YGGI.

This sequence belongs to the 1-acyl-sn-glycerol-3-phosphate acyltransferase family. In terms of tissue distribution, expressed in seam cells, vulval epithelial cells and the major epithelial syncytium hyp7, and in several head neurons including AIY interneurons.

It is found in the endoplasmic reticulum membrane. The catalysed reaction is a 2-acyl-sn-glycero-3-phospho-D-myo-inositol + an acyl-CoA = a 1,2-diacyl-sn-glycero-3-phospho-(1D-myo-inositol) + CoA. It catalyses the reaction a 2-acyl-sn-glycero-3-phospho-D-myo-inositol + octadecanoyl-CoA = 1-octadecanoyl-2-acyl-sn-glycero-3-phospho-1D-myo-inositol + CoA. Its pathway is phospholipid metabolism; phosphatidylinositol metabolism. Its function is as follows. Acyltransferase required for the fatty acid remodeling of phosphatidylinositol (1,2-diacyl-sn-glycero-3-phosphoinositol or PI). Mediates the conversion of lysophosphatidylinositol (2-acylglycerophosphatidylinositol or LPI) into PI (LPIAT activity). Has preference for saturated and mono-unsaturated fatty acids as acyl donors and sn-2-acyl lysoPI (2-acyl-sn-glycero-3-phospho-D-myo-inositol) as acyl acceptor. Contributes to the asymmetric cell division of epithelial cells. Asymmetric cell division is the fundamental mechanism by which multicellular organisms generate cell diversity. The protein is Lysophosphatidylinositol acyltransferase 10 of Caenorhabditis elegans.